The sequence spans 801 residues: Mitochondrial intermediate peptidase (801 aa).

The N-terminal 41 residues, 1–41 (MKDQLLVPLRRRPWTCQKCLQRLQLPRHQTRRSFETAASPF), are a transit peptide targeting the mitochondrion. His564 serves as a coordination point for Zn(2+). The active site involves Glu565. 2 residues coordinate Zn(2+): His568 and His571.

The protein belongs to the peptidase M3 family. It depends on Zn(2+) as a cofactor.

It localises to the mitochondrion matrix. The enzyme catalyses Release of an N-terminal octapeptide as second stage of processing of some proteins imported into the mitochondrion.. Cleaves proteins, imported into the mitochondrion, to their mature size. While most mitochondrial precursor proteins are processed to the mature form in one step by mitochondrial processing peptidase (MPP), the sequential cleavage by MIP of an octapeptide after initial processing by MPP is a required step for a subgroup of nuclear-encoded precursor proteins destined for the matrix or the inner membrane. This is Mitochondrial intermediate peptidase (oct1) from Aspergillus fumigatus (strain CBS 144.89 / FGSC A1163 / CEA10) (Neosartorya fumigata).